The sequence spans 395 residues: MYSLTNAQKDLQLKARDLAQCAFAPTAANTDVTEAYPWANVDRLLTEGFMGMTIPKEYGGQGRSYHDTVIVIEEMAKACATMGRITVEANMGAIGAIMNYGTEEQKKIAAAAVLSGDKPAICISEPNAGSAASEMTTRADRKGDRYILNGEKYWITGGGVSRLHLIFARVFDDGVDQGICAFICVREGNSPENLVVGRRLYAMGVRGIPETHLEFRDLQVHKSMLVVPPGGLKRGFASLMNAYNAQRVGAGTVALGIAQGAFEEAVTYAKERQQFGRPIAEFQGLQWMISDMSIQLEAARLLLHAAACSGESFPDIAMAARAKIFAAETANKVTNDSLQIYGSSGYGRHNPMERHVRDARMFTIAGGTAQILRTQVAGSILDMKLPQTRGGFLPK.

Residues 121-124 (ICIS), S130, and 153-156 (YWIT) contribute to the FAD site. 243–244 (YN) is a substrate binding site. FAD is bound by residues R272, Q339, S343, 366–370 (GGTAQ), and Q387.

This sequence belongs to the acyl-CoA dehydrogenase family. As to quaternary structure, homotrimer or homotetramer. It depends on FAD as a cofactor.

The enzyme catalyses 3-sulfinopropanoyl-CoA + H2O = propanoyl-CoA + sulfite + H(+). In terms of biological role, catalyzes the conversion 3-sulfinopropanoyl-CoA (3SP-CoA) to propanoyl-CoA by abstraction of sulfite. Does not show dehydrogenase activity. The chain is 3-sulfinopropanoyl-CoA desulfinase from Cupriavidus necator (strain ATCC 43291 / DSM 13513 / CCUG 52238 / LMG 8453 / N-1) (Ralstonia eutropha).